A 162-amino-acid chain; its full sequence is Nucleotide-binding protein AnaeK_0101 (162 aa).

The protein belongs to the YajQ family.

In terms of biological role, nucleotide-binding protein. The sequence is that of Nucleotide-binding protein AnaeK_0101 from Anaeromyxobacter sp. (strain K).